The chain runs to 214 residues: Calcineurin B homologous protein 3 (214 aa).

A lipid anchor (N-myristoyl glycine) is attached at Gly-2. In terms of domain architecture, EF-hand spans 110-145 (CRTDKLRFLFNMYDSDNDNKITLEEYRKVVEELLSG). Positions 123, 125, 127, 129, and 134 each coordinate Ca(2+).

This sequence belongs to the calcineurin regulatory subunit family. CHP subfamily. As to quaternary structure, monomer. Homodimer.

The protein localises to the nucleus. It localises to the cytoplasm. The protein resides in the membrane. Its subcellular location is the cell membrane. It is found in the cell projection. The protein localises to the lamellipodium. It localises to the ruffle membrane. In terms of biological role, functions as an integral cofactor in cell pH regulation by controlling plasma membrane-type Na(+)/H(+) exchange activity. Promotes the induction of hematopoietic stem cell differentiation toward megakaryocytic lineage. Essential for the coupling of ERK cascade activation with the expression of ETS family genes in megakaryocytic differentiation. Also involved in granulocytic differentiation in a ERK-dependent manner. Inhibits the phosphatase activity of calcineurin. This is Calcineurin B homologous protein 3 from Xenopus laevis (African clawed frog).